The primary structure comprises 508 residues: MEEIQRYLHLERSEQQDFLYPLIFQEYIYTFAHDRGFSRSIWSENRGYENKSSLLIVKRLINRMDQENHFLISPNDSNQNPFWACNKNFYSQILSEGFAFSVEIPFSRRLISCLEKKIVKFQNLRSIHSTFPFLEDNFSHLNFVLDILIPHPVHVEILVQTLRYWVKDASSLHFLRFFLNEYCNWNSVITPTKASSSFSKRNQRLFLFLYNSHVCEYESIFVFLRNQSSYLRSTSSGVLLERIYFYGKIKRLVNVFVKLKDFQANLWLVKEPYLHSIRYQRKSILASKGTSLFMNKWKCYLVTFWQSHFSLWFHPRRISINQLSNYSLDFLGYHSSVRMNPSVVRSQILENAFRINNAIKKFDTLVPIIPLVASLAKAKFCNVLGHPISKPVWADLSDSNILDRFGRICRNLSHYHSGSSKKKSLYRIKYILRLSCARTLARKHKSTVRTFLKRLGSVFLEEFLMSEENVLFLTFPKASSTFRRVYRSRIWYLDILSINDLANYKYKL.

It belongs to the intron maturase 2 family. MatK subfamily.

The protein localises to the plastid. The protein resides in the chloroplast. Functionally, usually encoded in the trnK tRNA gene intron. Probably assists in splicing its own and other chloroplast group II introns. This is Maturase K from Verbena rigida (Tuberous vervain).